Here is a 93-residue protein sequence, read N- to C-terminus: DNA-directed RNA polymerase subunit Rpo11 (93 aa).

This sequence belongs to the archaeal Rpo11/eukaryotic RPB11/RPC19 RNA polymerase subunit family. Part of the RNA polymerase complex.

It is found in the cytoplasm. It catalyses the reaction RNA(n) + a ribonucleoside 5'-triphosphate = RNA(n+1) + diphosphate. Functionally, DNA-dependent RNA polymerase (RNAP) catalyzes the transcription of DNA into RNA using the four ribonucleoside triphosphates as substrates. This Methanocella arvoryzae (strain DSM 22066 / NBRC 105507 / MRE50) protein is DNA-directed RNA polymerase subunit Rpo11.